Here is a 152-residue protein sequence, read N- to C-terminus: Transcriptional repressor NrdR (152 aa).

A zinc finger lies at 3 to 34 (CPKCTSIEDKVIDSRISKEGSTIRRRRECLEC). The 91-residue stretch at 49-139 (IVVIKRDGRR…VYKEFRDVSE (91 aa)) folds into the ATP-cone domain.

It belongs to the NrdR family. Requires Zn(2+) as cofactor.

Its function is as follows. Negatively regulates transcription of bacterial ribonucleotide reductase nrd genes and operons by binding to NrdR-boxes. The protein is Transcriptional repressor NrdR of Opitutus terrae (strain DSM 11246 / JCM 15787 / PB90-1).